The following is a 194-amino-acid chain: MTAIQLIVGLGNPGPEYEQTRHNAGALFVERLASAQRVSLTADKKYFGLTAKFSHQGNDVRLLIPTTYMNRSGQSVAALANFFRIKPEAILVAHDELDLPPGVAKLKRGGGHGGHNGLRDIIAQLGNQNDFHRLRLGIGHPGDAKLVSNFVLGRAPRAEQEKLDASIDFALGVLPDVLAGDFAKAMRELHSQKA.

TRNA is bound at residue Tyr-17. Catalysis depends on His-22, which acts as the Proton acceptor. TRNA contacts are provided by Tyr-68, Asn-70, and Asn-116.

This sequence belongs to the PTH family. As to quaternary structure, monomer.

The protein localises to the cytoplasm. It catalyses the reaction an N-acyl-L-alpha-aminoacyl-tRNA + H2O = an N-acyl-L-amino acid + a tRNA + H(+). Functionally, hydrolyzes ribosome-free peptidyl-tRNAs (with 1 or more amino acids incorporated), which drop off the ribosome during protein synthesis, or as a result of ribosome stalling. In terms of biological role, catalyzes the release of premature peptidyl moieties from peptidyl-tRNA molecules trapped in stalled 50S ribosomal subunits, and thus maintains levels of free tRNAs and 50S ribosomes. The polypeptide is Peptidyl-tRNA hydrolase (Pseudomonas putida (strain ATCC 700007 / DSM 6899 / JCM 31910 / BCRC 17059 / LMG 24140 / F1)).